The sequence spans 533 residues: Acid-sensing ion channel 3 (533 aa).

Residues 1–19 lie on the Cytoplasmic side of the membrane; the sequence is MKPRSGLEEAQRRQASDIR. The chain crosses the membrane as a helical span at residues 20–40; the sequence is VFASSCTMHGLGHIFGPGGLT. Thr-40 carries the phosphothreonine; by PKC modification. Residues 41–435 lie on the Extracellular side of the membrane; the sequence is LRRGLWATAV…EQKAAYEVSE (395 aa). Intrachain disulfides connect Cys-93–Cys-187, Cys-165–Cys-172, Cys-283–Cys-372, Cys-317–Cys-368, Cys-321–Cys-366, Cys-330–Cys-352, and Cys-332–Cys-344. An N-linked (GlcNAc...) asparagine glycan is attached at Asn-176. The disordered stretch occupies residues 286–310; the sequence is ASLDPDDFDPEPSDPLGSPRPRPSP. Residue Asn-400 is glycosylated (N-linked (GlcNAc...) asparagine). A helical transmembrane segment spans residues 436–456; that stretch reads LLGDIGGQMGLFIGASLLTIL. Positions 449-451 match the GAS motif; ion selectivity filter motif; sequence GAS. The Cytoplasmic segment spans residues 457-533; the sequence is EILDYLCEVF…HRTCYLVTRL (77 aa). Ser-523 bears the Phosphoserine; by PKC mark. The PDZ-binding motif lies at 530-533; the sequence is VTRL.

The protein belongs to the amiloride-sensitive sodium channel (TC 1.A.6) family. ASIC3 subfamily. Can form homotrimeric channels. Heterotrimer; forms functional heterotrimers producing channel with different properties. Forms heterotrimers with ASIC2; gives rise to a biphasic current with a sustained current which discriminates poorly between Na(+) and K(+). Interacts with STOM; inhibits ASIC3 acid-evoked current. Interacts with LIN7B (via PDZ domain); increases ASIC3 expression at the plasma membrane. Interacts with MAGI1 (via PDZ domain); probably regulates ASIC3. Interacts with GOPC (via PDZ domain); probably regulates ASIC3. Interacts with DLG4 (via PDZ domain); reduces ASIC3 expression at the plasma membrane. In terms of processing, could be phosphorylated by PKC, promoting activation of ASIC2/ASIC3 heterotrimers. As to expression, expressed in sciatic nerve and dorsal root ganglion (at protein level). Expressed in sensory neurons of dorsal root ganglion. Expressed in Golgi interneurons in the granular layer. Also found in superior cervical ganglia, spinal cord and brain stem.

The protein resides in the cell membrane. It is found in the cytoplasm. The catalysed reaction is Na(+)(in) = Na(+)(out). The enzyme catalyses K(+)(in) = K(+)(out). It carries out the reaction Ca(2+)(in) = Ca(2+)(out). With respect to regulation, inhibited by the diuretic drug amiloride. Inhibited by gadolinium ions. Inhibited by extracellular Ca(2+). Activated by lactate. Salicylic acid, diclofenac and aspirin inhibit the sustained current component. Activated by the vertebrate neuropeptides NPFF and NPSF, and the related FMRFamide. Specifically and reversibly inhibited by the a sea anemone toxin APETx2. ASIC3-containing channels are potentiated by the cono-RFamide CNF-Tx1.1, and probably CNF-Tx1.2 and CNF-Tx1.3 (AC P0DL71). In terms of biological role, forms pH-gated heterotrimeric sodium channels that act as postsynaptic excitatory receptors in the nervous system. Upon extracellular acidification, these channels generate a biphasic current with a fast inactivating and a slow sustained phase. ASIC3 is more sensitive to protons and gates between closed, open, and desensitized states faster than other ASICs. Displays high selectivity for sodium ions but can also permit the permeation of other cations. As a neuronal acid sensor, probably contributes to mechanoreception, acid nociception, and heat nociception. By forming heterotrimeric channels with ASIC2, generates a biphasic current with a fast inactivating and a slow sustained phase, which in sensory neurons is proposed to mediate the pain induced by acidosis that occurs in ischemic, damaged or inflamed tissues. This Rattus norvegicus (Rat) protein is Acid-sensing ion channel 3.